Reading from the N-terminus, the 708-residue chain is MISEIGKAAVAEMGILLARFREDHNKLWLIGTATCETYLRCQVYHSTMENDWDLQAVPIASRSPHPGIFPRLGNERILGSSMEPLNPLKSFTGSVPVLSSRGPGNLNPRLRKSCCPQCTEKFEQELAKLVSEFANQSSEDKSESPRPQLPQWLQNAKLNNDSKVTALSQSKDQALLQQKTQELQKKWNDTCLQLHPNFQQNIGPERTVSPALCMPGLYNPNLLLRQPLQPKLQPSKNLGVSLQLNTTQMASKPQEKAASPPGSPVRTDLVLGPKQTETTPEKTLEDQAKDFLSRISSVPQNKFLDKFASALDADTFKRLLKGLMEKAWWQQDAASSVASAVSRCRLGNGRQRGGAPKGDIWLLFSGPDRFAKRKMASVLAEQFCGNSPIMICLGSRRDDEESDLGFRGKTALDRIAEAVRRNPVSVIMLEDIDEANVLIRGSIKRAMDRGKLTDSHGREISLGNVIFILTGNWSTMSPESYRNEYLMEEKKLVSLASSNWQLRLSLGEKSAKRRASWLHDEDRPTRPRKELNLGLAFDLNEAADVEDYRTDGSHNSSDLTVDHEEEPGLENRRFAIASVPHDLVSSVDDTIPFKLIEFSFARREIKKTISKKFSMVVDDKVSIEVEDDIVDRILGGLWRGQTSLEQWVEKVLGPSFDQLQPRLSTLDENAVVRLQLELYTALKGQSNGECLPSKVTIVADGQVMSTTS.

The disordered stretch occupies residues 248–283 (QMASKPQEKAASPPGSPVRTDLVLGPKQTETTPEKT). The EAR signature appears at 537 to 541 (FDLNE).

It belongs to the ClpA/ClpB family.

Its function is as follows. Probable component of a transcriptional corepressor complex that acts downstream of MAX2 to negatively regulate karrikins/strigolactone responses. Involved in the (-)-germacrene D signaling pathway influencing plant fitness and occurring in the stigma in a KAI2IA-dependent manner. The protein is Protein SUPPRESSOR OF MAX2 1A of Petunia hybrida (Petunia).